The sequence spans 301 residues: uncharacterized protein (301 aa).

Transmembrane regions (helical) follow at residues 1–21 (MSWI…LGIV), 33–53 (SVLF…YFYY), 72–92 (AMSL…KIPG), 101–121 (FGII…TILI), 124–144 (FAWL…KTFY), 185–205 (YFTP…VFAI), 220–240 (IIYT…FCLA), 246–266 (FSYI…KIFI), and 270–290 (IAIP…FGII).

It belongs to the TerC family.

The protein resides in the cell membrane. This is an uncharacterized protein from Rickettsia felis (strain ATCC VR-1525 / URRWXCal2) (Rickettsia azadi).